A 146-amino-acid polypeptide reads, in one-letter code: Hemoglobin subunit beta-1 (146 aa).

The Globin domain occupies 2 to 146 (GLTAHDRQLI…IADALGKGYH (145 aa)). Positions 63 and 92 each coordinate heme b.

The protein belongs to the globin family. Heterotetramer of two alpha chains and two beta chains. In terms of tissue distribution, red blood cells.

Its function is as follows. Involved in oxygen transport from the lung to the various peripheral tissues. This chain is Hemoglobin subunit beta-1 (hbb1), found in Xenopus borealis (Kenyan clawed frog).